The following is a 521-amino-acid chain: Maturase K (521 aa).

The protein belongs to the intron maturase 2 family. MatK subfamily.

The protein localises to the plastid. It localises to the chloroplast. Functionally, usually encoded in the trnK tRNA gene intron. Probably assists in splicing its own and other chloroplast group II introns. In Kniphofia uvaria (Red-hot poker), this protein is Maturase K.